Here is a 418-residue protein sequence, read N- to C-terminus: Light-independent protochlorophyllide reductase subunit N (418 aa).

[4Fe-4S] cluster contacts are provided by Cys-17, Cys-42, and Cys-103.

It belongs to the BchN/ChlN family. Protochlorophyllide reductase is composed of three subunits; ChlL, ChlN and ChlB. Forms a heterotetramer of two ChlB and two ChlN subunits. It depends on [4Fe-4S] cluster as a cofactor.

The enzyme catalyses chlorophyllide a + oxidized 2[4Fe-4S]-[ferredoxin] + 2 ADP + 2 phosphate = protochlorophyllide a + reduced 2[4Fe-4S]-[ferredoxin] + 2 ATP + 2 H2O. It functions in the pathway porphyrin-containing compound metabolism; chlorophyll biosynthesis (light-independent). In terms of biological role, component of the dark-operative protochlorophyllide reductase (DPOR) that uses Mg-ATP and reduced ferredoxin to reduce ring D of protochlorophyllide (Pchlide) to form chlorophyllide a (Chlide). This reaction is light-independent. The NB-protein (ChlN-ChlB) is the catalytic component of the complex. The protein is Light-independent protochlorophyllide reductase subunit N of Prochlorococcus marinus (strain AS9601).